The following is a 397-amino-acid chain: DNA-directed RNA polymerase subunit Rpo1C (397 aa).

This sequence belongs to the RNA polymerase beta' chain family. As to quaternary structure, part of the RNA polymerase complex.

The protein resides in the cytoplasm. It catalyses the reaction RNA(n) + a ribonucleoside 5'-triphosphate = RNA(n+1) + diphosphate. DNA-dependent RNA polymerase (RNAP) catalyzes the transcription of DNA into RNA using the four ribonucleoside triphosphates as substrates. Forms part of the jaw domain. This Halobacterium salinarum (strain ATCC 29341 / DSM 671 / R1) protein is DNA-directed RNA polymerase subunit Rpo1C.